The sequence spans 747 residues: Probable cyclic nucleotide-gated ion channel 6 (747 aa).

At 1–117 the chain is on the cytoplasmic side; it reads MFDTCGPKGV…DKFLLLCNKL (117 aa). Residues 118 to 138 traverse the membrane as a helical segment; sequence FVASCILAVSVDPLFLYLPFI. Topologically, residues 139–150 are extracellular; sequence NDKAKCVGIDRK. Residues 151-171 form a helical membrane-spanning segment; the sequence is LAIIVTTIRTVIDSFYLFHMA. The Cytoplasmic portion of the chain corresponds to 172-205; it reads LRFRTAYVAPSSRVFGRGELVIDPAQIAKRYLQQ. The chain crosses the membrane as a helical span at residues 206–226; that stretch reads YFIIDLLSVLPVPQIIVWRFL. At 227–239 the chain is on the extracellular side; that stretch reads YTSRGANVLATKQ. The helical transmembrane segment at 240 to 260 threads the bilayer; that stretch reads ALRYIVLVQYIPRFLRMYPLS. The Cytoplasmic portion of the chain corresponds to 261–280; sequence SELKRTAGVFAETAWAGAAY. The helical transmembrane segment at 281 to 301 threads the bilayer; the sequence is YLLLYMLASHIVGALWYLLAL. Topologically, residues 302–407 are extracellular; sequence ERNNDCWSKA…GQGLETSTYP (106 aa). The chain crosses the membrane as a helical span at residues 408-428; sequence GEVIFSITLAIAGLLLFALLI. Residues 429 to 747 are Cytoplasmic-facing; sequence GNMQTYLQSL…PEPDFSAEDH (319 aa). A nucleoside 3',5'-cyclic phosphate is bound by residues 514 to 638 and D585; that span reads LFEN…SRQV. The segment at 630–645 is calmodulin-binding; the sequence is FRRLHSRQVQHTFRFY. The IQ domain occupies 650–679; sequence RTWAACFMQAAWRRYIKRKKLEQLRKEEEE.

It belongs to the cyclic nucleotide-gated cation channel (TC 1.A.1.5) family. Homotetramer or heterotetramer.

The protein resides in the cell membrane. Probable cyclic nucleotide-gated ion channel. This is Probable cyclic nucleotide-gated ion channel 6 (CNGC6) from Arabidopsis thaliana (Mouse-ear cress).